Reading from the N-terminus, the 856-residue chain is DNA mismatch repair protein MutS (856 aa).

An ATP-binding site is contributed by 615-622; sequence GPNMGGKS. Polar residues predominate over residues 798-807; sequence ETTGHQQAIK. The disordered stretch occupies residues 798–817; sequence ETTGHQQAIKNPSKAPREEQ.

The protein belongs to the DNA mismatch repair MutS family.

Functionally, this protein is involved in the repair of mismatches in DNA. It is possible that it carries out the mismatch recognition step. This protein has a weak ATPase activity. This Photobacterium profundum (strain SS9) protein is DNA mismatch repair protein MutS.